The primary structure comprises 117 residues: Large ribosomal subunit protein bL20 (117 aa).

It belongs to the bacterial ribosomal protein bL20 family.

Binds directly to 23S ribosomal RNA and is necessary for the in vitro assembly process of the 50S ribosomal subunit. It is not involved in the protein synthesizing functions of that subunit. This chain is Large ribosomal subunit protein bL20, found in Crocosphaera subtropica (strain ATCC 51142 / BH68) (Cyanothece sp. (strain ATCC 51142)).